Here is a 100-residue protein sequence, read N- to C-terminus: Urease subunit gamma (100 aa).

It belongs to the urease gamma subunit family. As to quaternary structure, heterotrimer of UreA (gamma), UreB (beta) and UreC (alpha) subunits. Three heterotrimers associate to form the active enzyme.

It localises to the cytoplasm. It catalyses the reaction urea + 2 H2O + H(+) = hydrogencarbonate + 2 NH4(+). The protein operates within nitrogen metabolism; urea degradation; CO(2) and NH(3) from urea (urease route): step 1/1. This chain is Urease subunit gamma, found in Nostoc punctiforme (strain ATCC 29133 / PCC 73102).